A 373-amino-acid polypeptide reads, in one-letter code: Chorismate synthase (373 aa).

Positions 48 and 54 each coordinate NADP(+). Residues 131-133 (RSS), 243-244 (NA), glycine 288, 303-307 (KPTSS), and arginine 329 each bind FMN.

It belongs to the chorismate synthase family. Homotetramer. Requires FMNH2 as cofactor.

It catalyses the reaction 5-O-(1-carboxyvinyl)-3-phosphoshikimate = chorismate + phosphate. It participates in metabolic intermediate biosynthesis; chorismate biosynthesis; chorismate from D-erythrose 4-phosphate and phosphoenolpyruvate: step 7/7. Its function is as follows. Catalyzes the anti-1,4-elimination of the C-3 phosphate and the C-6 proR hydrogen from 5-enolpyruvylshikimate-3-phosphate (EPSP) to yield chorismate, which is the branch point compound that serves as the starting substrate for the three terminal pathways of aromatic amino acid biosynthesis. This reaction introduces a second double bond into the aromatic ring system. This Beijerinckia indica subsp. indica (strain ATCC 9039 / DSM 1715 / NCIMB 8712) protein is Chorismate synthase.